The primary structure comprises 425 residues: Protein UL117 (425 aa).

Residues 59 to 83 (PTTTSSSLAPPRDDERRPTPPLRPP) form a disordered region.

Belongs to the herpesviridae U84 family.

The protein localises to the host nucleus. Its function is as follows. Plays a role in the inhibition of host DNA replication in the infected cell. Targets the mini-chromosome maintenance (MCM) complex and blocks the accumulation of MCM proteins and their loading onto host chromatin. In Homo sapiens (Human), this protein is Protein UL117 (UL117).